The following is a 173-amino-acid chain: Lens fiber membrane intrinsic protein (173 aa).

Topologically, residues 1–3 (MYS) are cytoplasmic. A helical transmembrane segment spans residues 4–24 (FMGGGLFCAWVGTILLVVATA). Residues 25 to 66 (TDHWMQYRLSGAFAHQGLWRYCLGTKCYLQTESIAYWNATRA) are Extracellular-facing. C-linked (Man) tryptophan; partial glycans are attached at residues Trp43 and Trp61. The helical transmembrane segment at 67–87 (FMILSSLCATSGIIMGIVAFA) threads the bilayer. Residues 88–98 (QQPTFTRLSRP) are Cytoplasmic-facing. The chain crosses the membrane as a helical span at residues 99–119 (FSAGIMFFASTFFVLLALAIY). The Extracellular segment spans residues 120-140 (TGVTVSFLGRRFGDWRFSWSY). A helical membrane pass occupies residues 141–161 (ILGWVALLMTFFAGIFYMCAY). Residues 162 to 173 (RMHECRRLSTPR) lie on the Cytoplasmic side of the membrane. The residue at position 170 (Ser170) is a Phosphoserine. Phosphothreonine is present on Thr171.

Belongs to the PMP-22/EMP/MP20 family. As to quaternary structure, seems to be associated with itself or another lens membrane component via disulfide bonds. In terms of processing, predominantly monophosphorylated on Ser-170. Only about 15% diphosphorylated on both Ser-170 and Thr-171. C-glycosylated. Trp-43 is more extensively C-glycosylated than Trp-61. C-glycosylation may be involved in membrane trafficking. Eye lens specific.

The protein resides in the membrane. Present in the thicker 16-17 nm junctions of mammalian lens fiber cells, where it may contribute to cell junctional organization. Acts as a receptor for calmodulin. May play an important role in both lens development and cataractogenesis. This Bos taurus (Bovine) protein is Lens fiber membrane intrinsic protein (LIM2).